The chain runs to 484 residues: Ferrochelatase-2, chloroplastic (484 aa).

It belongs to the ferrochelatase family.

It is found in the plastid. Its subcellular location is the chloroplast. The enzyme catalyses heme b + 2 H(+) = protoporphyrin IX + Fe(2+). It functions in the pathway porphyrin-containing compound metabolism; protoheme biosynthesis; protoheme from protoporphyrin-IX: step 1/1. Catalyzes the ferrous insertion into protoporphyrin IX. This Hordeum vulgare (Barley) protein is Ferrochelatase-2, chloroplastic (HEMH).